Here is a 518-residue protein sequence, read N- to C-terminus: Glucan 1,4-alpha-maltohexaosidase (518 aa).

Residues M1–A33 form the signal peptide. Ca(2+) contacts are provided by N139, D196, A219, D221, D232, D238, D240, and D242. Residue D196 coordinates Na(+). Residues D221, D232, and D238 each contribute to the Na(+) site. D269 acts as the Nucleophile in catalysis. Ca(2+) is bound at residue H273. E299 (proton donor) is an active-site residue.

It belongs to the glycosyl hydrolase 13 family. It depends on Ca(2+) as a cofactor. The cofactor is Na(+).

Its subcellular location is the secreted. The enzyme catalyses Hydrolysis of (1-&gt;4)-alpha-D-glucosidic linkages in amylaceous polysaccharides, to remove successive maltohexaose residues from the non-reducing chain ends.. The protein operates within glycan degradation; starch degradation. The polypeptide is Glucan 1,4-alpha-maltohexaosidase (Bacillus sp. (strain 707)).